The chain runs to 481 residues: UDP-N-acetylmuramoylalanine--D-glutamate ligase (481 aa).

108 to 114 (GTNGKTS) serves as a coordination point for ATP.

It belongs to the MurCDEF family.

Its subcellular location is the cytoplasm. It catalyses the reaction UDP-N-acetyl-alpha-D-muramoyl-L-alanine + D-glutamate + ATP = UDP-N-acetyl-alpha-D-muramoyl-L-alanyl-D-glutamate + ADP + phosphate + H(+). It functions in the pathway cell wall biogenesis; peptidoglycan biosynthesis. Its function is as follows. Cell wall formation. Catalyzes the addition of glutamate to the nucleotide precursor UDP-N-acetylmuramoyl-L-alanine (UMA). The protein is UDP-N-acetylmuramoylalanine--D-glutamate ligase of Bifidobacterium longum subsp. infantis (strain ATCC 15697 / DSM 20088 / JCM 1222 / NCTC 11817 / S12).